A 480-amino-acid chain; its full sequence is Phosphomethylpyrimidine synthase (480 aa).

Substrate-binding positions include Asn-66, Met-95, Tyr-124, His-159, 179–181 (SRG), 220–223 (DGLR), and Glu-259. Residue His-263 coordinates Zn(2+). Tyr-286 is a binding site for substrate. A Zn(2+)-binding site is contributed by His-327. [4Fe-4S] cluster contacts are provided by Cys-407, Cys-410, and Cys-415. A disordered region spans residues 426–480 (DGDMESIEADADDRTPLEDSSAAAVNRPPVGTHDGADIPGPDADMPADTEGSADD). Residues 470-480 (MPADTEGSADD) show a composition bias toward acidic residues.

This sequence belongs to the ThiC family. The cofactor is [4Fe-4S] cluster.

The catalysed reaction is 5-amino-1-(5-phospho-beta-D-ribosyl)imidazole + S-adenosyl-L-methionine = 4-amino-2-methyl-5-(phosphooxymethyl)pyrimidine + CO + 5'-deoxyadenosine + formate + L-methionine + 3 H(+). It functions in the pathway cofactor biosynthesis; thiamine diphosphate biosynthesis. In terms of biological role, catalyzes the synthesis of the hydroxymethylpyrimidine phosphate (HMP-P) moiety of thiamine from aminoimidazole ribotide (AIR) in a radical S-adenosyl-L-methionine (SAM)-dependent reaction. The sequence is that of Phosphomethylpyrimidine synthase from Haloarcula marismortui (strain ATCC 43049 / DSM 3752 / JCM 8966 / VKM B-1809) (Halobacterium marismortui).